The sequence spans 386 residues: Erythronate-4-phosphate dehydrogenase (386 aa).

Substrate-binding residues include S59 and T81. Residue D162 participates in NAD(+) binding. The active site involves R239. D262 is an NAD(+) binding site. E267 is a catalytic residue. Residue H284 is the Proton donor of the active site. G287 is an NAD(+) binding site. Substrate is bound at residue Y288.

The protein belongs to the D-isomer specific 2-hydroxyacid dehydrogenase family. PdxB subfamily. Homodimer.

The protein localises to the cytoplasm. The catalysed reaction is 4-phospho-D-erythronate + NAD(+) = (R)-3-hydroxy-2-oxo-4-phosphooxybutanoate + NADH + H(+). Its pathway is cofactor biosynthesis; pyridoxine 5'-phosphate biosynthesis; pyridoxine 5'-phosphate from D-erythrose 4-phosphate: step 2/5. Catalyzes the oxidation of erythronate-4-phosphate to 3-hydroxy-2-oxo-4-phosphonooxybutanoate. This is Erythronate-4-phosphate dehydrogenase from Psychrobacter cryohalolentis (strain ATCC BAA-1226 / DSM 17306 / VKM B-2378 / K5).